The sequence spans 297 residues: MNNYISGATTAIITPFKNGTLDEATYANLIQRQIDNNIDAICPVGTTGESATLSHDEHKRCIEIAVEVCKGSNAKVLAGAGSNATHEAIDIAKHAEACGVDALFSVSPYYNKPSQEGLYQHYKAIASAVEVPFMLYNVPGRTGVDILPDTVKRLFDDVWNIMGIKEATGSIERTVELLAKVPDLYVFSGDDSIDFPILASGGKGITSVTANLLPDMKADLTHAALRGDFKTSKAINDELFEINKVLFCESNPIPIKAAMYIAGLIDTLEYRLPLVPPSSENMKKIENVMKKYKIVGA.

A pyruvate-binding site is contributed by threonine 47. Tyrosine 136 functions as the Proton donor/acceptor in the catalytic mechanism. Lysine 165 functions as the Schiff-base intermediate with substrate in the catalytic mechanism. Threonine 206 contributes to the pyruvate binding site.

This sequence belongs to the DapA family. In terms of assembly, homotetramer; dimer of dimers.

The protein localises to the cytoplasm. It catalyses the reaction L-aspartate 4-semialdehyde + pyruvate = (2S,4S)-4-hydroxy-2,3,4,5-tetrahydrodipicolinate + H2O + H(+). It functions in the pathway amino-acid biosynthesis; L-lysine biosynthesis via DAP pathway; (S)-tetrahydrodipicolinate from L-aspartate: step 3/4. In terms of biological role, catalyzes the condensation of (S)-aspartate-beta-semialdehyde [(S)-ASA] and pyruvate to 4-hydroxy-tetrahydrodipicolinate (HTPA). This Sulfurovum sp. (strain NBC37-1) protein is 4-hydroxy-tetrahydrodipicolinate synthase.